The primary structure comprises 604 residues: Procollagen galactosyltransferase 1 (604 aa).

The first 18 residues, 1–18 (MHLLCFFFLLLWTGPARS), serve as a signal peptide directing secretion. Residues Asn78, Asn166, Asn363, and Asn561 are each glycosylated (N-linked (GlcNAc...) asparagine). Positions 570-580 (RARSRKSREQE) are enriched in basic and acidic residues. The segment at 570–604 (RARSRKSREQEELSSEAQNTDVLQSPLDSTARDEL) is disordered. Over residues 584–597 (SEAQNTDVLQSPLD) the composition is skewed to polar residues. Positions 601 to 604 (RDEL) match the Prevents secretion from ER motif.

Belongs to the glycosyltransferase 25 family.

It localises to the endoplasmic reticulum lumen. It carries out the reaction (5R)-5-hydroxy-L-lysyl-[collagen] + UDP-alpha-D-galactose = (5R)-5-O-(beta-D-galactosyl)-5-hydroxy-L-lysyl-[collagen] + UDP + H(+). In terms of biological role, beta-galactosyltransferase that transfers beta-galactose to hydroxylysine residues of type I collagen. By acting on collagen glycosylation, facilitates the formation of collagen triple helix. This Danio rerio (Zebrafish) protein is Procollagen galactosyltransferase 1 (colgalt1).